We begin with the raw amino-acid sequence, 152 residues long: Small ribosomal subunit protein uS13 (152 aa).

This sequence belongs to the universal ribosomal protein uS13 family. As to quaternary structure, component of the small ribosomal subunit.

The protein resides in the cytoplasm. In terms of biological role, component of the small ribosomal subunit. The ribosome is a large ribonucleoprotein complex responsible for the synthesis of proteins in the cell. Plays an essential role in early embryonic development. This Danio rerio (Zebrafish) protein is Small ribosomal subunit protein uS13 (rps18).